Reading from the N-terminus, the 343-residue chain is Methionine import ATP-binding protein MetN 1 (343 aa).

In terms of domain architecture, ABC transporter spans 2–241 (IKLSNITKVF…PKTPLAQKFI (240 aa)). 38-45 (GASGAGKS) serves as a coordination point for ATP.

It belongs to the ABC transporter superfamily. Methionine importer (TC 3.A.1.24) family. The complex is composed of two ATP-binding proteins (MetN), two transmembrane proteins (MetI) and a solute-binding protein (MetQ).

Its subcellular location is the cell inner membrane. The catalysed reaction is L-methionine(out) + ATP + H2O = L-methionine(in) + ADP + phosphate + H(+). It carries out the reaction D-methionine(out) + ATP + H2O = D-methionine(in) + ADP + phosphate + H(+). Part of the ABC transporter complex MetNIQ involved in methionine import. Responsible for energy coupling to the transport system. This chain is Methionine import ATP-binding protein MetN 1, found in Salmonella typhimurium (strain LT2 / SGSC1412 / ATCC 700720).